Here is a 943-residue protein sequence, read N- to C-terminus: MTDYKATLNLPETAFPMKAGLPQREPETLKFWNDIGLYQKLRAIGGDRPKFVLHDGPPYANGSIHIGHAVNKILKDIIVRSKTLAGYDAPYVPGWDCHGLPIEHKVETTHGKNLPADKTRELCREYAAEQIEGQKADFIRLGVLGEWDNPYKTMNFANEANEIRALAEMVKQDFVFKGLKPVNWCFDCGSALAEAEVEYADKKSPTIDVGFPVADADKLAAAFGLAALDKPAQIVIWTTTPWTIPANQALNVHPEIDYALVDAGDRYLVLAEALVESCLARYQREGKVVATAKGEALELINFRHPFYERLSPVYLADYVALDAGTGIVHSSPAYGEDDFYTCKRYGMSNDDILSPVQSNGVYVDSLPFFGGQFIWKANPNVVAKLEEVGSLLAHETINHSYMHCWRHKTPLIYRATAQWFVGMDKQPRQGASLRERALEAITQTEFVPGWGQARLHGMIAGRPDWCISRQRNWGVPIPFFLHKASGELHPRTVELMEEVAQRVEKEGIEAWFKLDAAELLGEEAAQYDKINDTLDVWFDSGTTHWHVLRGSHRIGHASGPVADLYLEGSDQHRGWFHSSLLTGCAIDNHAPYRQLLTHGFTVDESGRKMSKSLGNTVVPQTVIDTLGADILRLWVASTDYSGEIAVSQQILQRSADAYRRIRNTTRFLLSNLNGFDAATDLLPPQEMLALDRWAVDRALLLQREIEEAYREYRFWNVYSKVHNFCVQELGGFYLDIIKDRQYTTGANSVARRSCQTALFHIAEALVRWIAPILAFTAEEVWKFLPGERAESVMLATWYDGLSELPADVTLNRQYWEQVMAVKAAVNKELENQRAAKAVGGNLQAEVTLYAEDALQAQLAKLGNELRFVLITSTATLAPLSAAPADAVDSEVAGLKLKVVKSTHAKCGRCWHHREDVGQHAAHPDLCGRCIENIEGSGEVRHYA.

Positions 58-68 (PYANGSIHIGH) match the 'HIGH' region motif. Position 567 (Glu567) interacts with L-isoleucyl-5'-AMP. Positions 608 to 612 (KMSKS) match the 'KMSKS' region motif. Lys611 lines the ATP pocket. The Zn(2+) site is built by Cys906, Cys909, Cys926, and Cys929.

It belongs to the class-I aminoacyl-tRNA synthetase family. IleS type 1 subfamily. Monomer. Requires Zn(2+) as cofactor.

The protein localises to the cytoplasm. It catalyses the reaction tRNA(Ile) + L-isoleucine + ATP = L-isoleucyl-tRNA(Ile) + AMP + diphosphate. In terms of biological role, catalyzes the attachment of isoleucine to tRNA(Ile). As IleRS can inadvertently accommodate and process structurally similar amino acids such as valine, to avoid such errors it has two additional distinct tRNA(Ile)-dependent editing activities. One activity is designated as 'pretransfer' editing and involves the hydrolysis of activated Val-AMP. The other activity is designated 'posttransfer' editing and involves deacylation of mischarged Val-tRNA(Ile). The sequence is that of Isoleucine--tRNA ligase from Pseudomonas aeruginosa (strain UCBPP-PA14).